The following is a 525-amino-acid chain: Cytochrome P450 750A1 (525 aa).

Residues 13–33 form a helical membrane-spanning segment; sequence PLPLPAILIATFIFFFSCWIL. C465 lines the heme pocket.

It belongs to the cytochrome P450 family. Heme serves as cofactor.

It is found in the membrane. This Pinus taeda (Loblolly pine) protein is Cytochrome P450 750A1 (CYP750A1).